Reading from the N-terminus, the 487-residue chain is Betaine aldehyde dehydrogenase (487 aa).

K(+)-binding residues include I27 and D93. An NAD(+)-binding site is contributed by 149–151 (GAW). K161 serves as the catalytic Charge relay system. Residues 175 to 178 (KPSE) and 228 to 231 (SVPT) each bind NAD(+). Residue L243 participates in K(+) binding. E249 serves as the catalytic Proton acceptor. G251, C283, and E384 together coordinate NAD(+). The Nucleophile role is filled by C283. C283 is subject to Cysteine sulfenic acid (-SOH). K(+) is bound by residues K454 and G457. The Charge relay system role is filled by E461.

This sequence belongs to the aldehyde dehydrogenase family. As to quaternary structure, dimer of dimers. K(+) serves as cofactor.

It carries out the reaction betaine aldehyde + NAD(+) + H2O = glycine betaine + NADH + 2 H(+). It participates in amine and polyamine biosynthesis; betaine biosynthesis via choline pathway; betaine from betaine aldehyde: step 1/1. In terms of biological role, involved in the biosynthesis of the osmoprotectant glycine betaine. Catalyzes the irreversible oxidation of betaine aldehyde to the corresponding acid. The sequence is that of Betaine aldehyde dehydrogenase from Brucella melitensis biotype 2 (strain ATCC 23457).